A 528-amino-acid chain; its full sequence is Probable serine/threonine-protein kinase DDB_G0282417 (528 aa).

Residues Asn-49–Asn-77 are compositionally biased toward low complexity. The disordered stretch occupies residues Asn-49 to Ala-84. A Protein kinase domain is found at Gln-136–Ser-466. ATP contacts are provided by residues Ile-142–Val-150 and Lys-166. Asp-266 serves as the catalytic Proton acceptor.

The protein belongs to the protein kinase superfamily. Ser/Thr protein kinase family.

The enzyme catalyses L-seryl-[protein] + ATP = O-phospho-L-seryl-[protein] + ADP + H(+). It catalyses the reaction L-threonyl-[protein] + ATP = O-phospho-L-threonyl-[protein] + ADP + H(+). This Dictyostelium discoideum (Social amoeba) protein is Probable serine/threonine-protein kinase DDB_G0282417.